The following is an 829-amino-acid chain: Leucine--tRNA ligase (829 aa).

Residues 42–52 (PYPSGNLHMGH) carry the 'HIGH' region motif. The short motif at 582 to 586 (KMSKS) is the 'KMSKS' region element. Residue K585 participates in ATP binding.

The protein belongs to the class-I aminoacyl-tRNA synthetase family.

It localises to the cytoplasm. The catalysed reaction is tRNA(Leu) + L-leucine + ATP = L-leucyl-tRNA(Leu) + AMP + diphosphate. The polypeptide is Leucine--tRNA ligase (Moorella thermoacetica (strain ATCC 39073 / JCM 9320)).